Here is a 142-residue protein sequence, read N- to C-terminus: MDMGLREMCVGEKRTVIIPPHLGYGEAGVDGEVPGSAVLVFDIELLELVAGLPEGYMFIWNGEVSPNLFEEIDKDGNGEVLLEEFSEYIHAQVASGKGKLAPGFDAELIVKNMFTNQDRNGDGKVTAEEFKLKDQEAKQDEL.

A PPIase FKBP-type domain is found at 1–49; the sequence is MDMGLREMCVGEKRTVIIPPHLGYGEAGVDGEVPGSAVLVFDIELLELV. EF-hand domains are found at residues 60 to 95 and 105 to 140; these read WNGEVSPNLFEEIDKDGNGEVLLEEFSEYIHAQVAS and DAELIVKNMFTNQDRNGDGKVTAEEFKLKDQEAKQD. Residues Asp-118, Asn-120, Asp-122, Lys-124, and Glu-129 each contribute to the Ca(2+) site.

This is Putative FK506-binding protein 9-like protein (FKBP9P1) from Homo sapiens (Human).